The sequence spans 299 residues: Transcription termination/antitermination protein NusG (299 aa).

The segment at 30–96 is disordered; it reads DPDEAELADA…APVEPAEPVD (67 aa). Repeat copies occupy residues 46–49 and 70–73. Positions 46-87 are 4 X 4 AA repeats of E-E-A-A; that stretch reads EEAALHVESDEDEDEADVEVDAAVEEAADDAEVAEEEAEEAA. A compositionally biased stretch (acidic residues) spans 54–87; that stretch reads SDEDEDEADVEVDAAVEEAADDAEVAEEEAEEAA. The 3; approximate repeat unit spans residues 80-83; it reads EEEA. Repeat 4 spans residues 84-87; it reads EEAA. In terms of domain architecture, KOW spans 248 to 276; that stretch reads VGDSVTVTDGPFATLQATINEINPDSKKV.

Belongs to the NusG family. Post-translationally, the N-terminus is blocked.

In terms of biological role, participates in transcription elongation, termination and antitermination. The protein is Transcription termination/antitermination protein NusG of Streptomyces virginiae (Streptomyces cinnamonensis).